We begin with the raw amino-acid sequence, 314 residues long: MSGDTCLTTTLCPAVGPKPKTCSFKVGSLGNKYVRLNVGGSLYYTTVQVLTRHDTMLKAMFSGRMEVLTDKEGWILIDRCGKHFGTILNYLRDDTIALPKHRQEIKELMAEAKYYLIQGLVDMCQAALQDKKDLYEPVCNIPIITSPKEEERLIESSMKPVVKLLYNRSNNKYSYTSNSDDNLLKNIELFDKLSLRFNGRVLFIKDVIGDEICCWSFYGQGRKLAEVCCTSIVYATEKKQTKVEFPEARIYEETLNVLLYETPRVPDNSLLEATSRSRSQASHSEDDDGFELRDRVRRIHVKRYSTYDDRQLGH.

A BTB domain is found at 32–100 (KYVRLNVGGS…LRDDTIALPK (69 aa)).

It belongs to the BACURD family. In terms of assembly, component of the BCR(TNFAIP1) E3 ubiquitin ligase complex, at least composed of CUL3, TNFAIP1/BACURD2 and RBX1.

It is found in the cytoplasm. The protein localises to the nucleus. The protein resides in the endosome. The protein operates within protein modification; protein ubiquitination. Functionally, substrate-specific adapter of a BCR (BTB-CUL3-RBX1) E3 ubiquitin-protein ligase complex involved in regulation of cytoskeleton structure. The BCR(TNFAIP1) E3 ubiquitin ligase complex mediates the ubiquitination of target proteins, leading to their degradation by the proteasome. The chain is BTB/POZ domain-containing adapter for CUL3-mediated RhoA degradation protein 2 (TNFAIP1) from Gallus gallus (Chicken).